The primary structure comprises 391 residues: 1-deoxy-D-xylulose 5-phosphate reductoisomerase (391 aa).

5 residues coordinate NADPH: Thr11, Gly12, Ser13, Ile14, and Asn126. Residue Lys127 participates in 1-deoxy-D-xylulose 5-phosphate binding. Glu128 contacts NADPH. Residue Asp152 participates in Mn(2+) binding. The 1-deoxy-D-xylulose 5-phosphate site is built by Ser153, Glu154, Ser176, and His199. Residue Glu154 coordinates Mn(2+). Gly205 lines the NADPH pocket. Residues Ser212, Asn217, Lys218, and Glu221 each coordinate 1-deoxy-D-xylulose 5-phosphate. Glu221 provides a ligand contact to Mn(2+).

The protein belongs to the DXR family. Requires Mg(2+) as cofactor. Mn(2+) serves as cofactor.

The catalysed reaction is 2-C-methyl-D-erythritol 4-phosphate + NADP(+) = 1-deoxy-D-xylulose 5-phosphate + NADPH + H(+). It functions in the pathway isoprenoid biosynthesis; isopentenyl diphosphate biosynthesis via DXP pathway; isopentenyl diphosphate from 1-deoxy-D-xylulose 5-phosphate: step 1/6. Its function is as follows. Catalyzes the NADPH-dependent rearrangement and reduction of 1-deoxy-D-xylulose-5-phosphate (DXP) to 2-C-methyl-D-erythritol 4-phosphate (MEP). The polypeptide is 1-deoxy-D-xylulose 5-phosphate reductoisomerase (Acidithiobacillus ferrooxidans (strain ATCC 53993 / BNL-5-31) (Leptospirillum ferrooxidans (ATCC 53993))).